Reading from the N-terminus, the 650-residue chain is Acetyl-coenzyme A synthetase (650 aa).

CoA-binding positions include 191-194 (RGGR), T311, and N335. ATP contacts are provided by residues 387–389 (GEP), 411–416 (DTWWQT), D500, and R515. S523 is a CoA binding site. ATP is bound at residue R526. 3 residues coordinate Mg(2+): V537, H539, and V542. A CoA-binding site is contributed by R584. K609 carries the N6-acetyllysine modification.

This sequence belongs to the ATP-dependent AMP-binding enzyme family. The cofactor is Mg(2+). Post-translationally, acetylated. Deacetylation by the SIR2-homolog deacetylase activates the enzyme.

The catalysed reaction is acetate + ATP + CoA = acetyl-CoA + AMP + diphosphate. In terms of biological role, catalyzes the conversion of acetate into acetyl-CoA (AcCoA), an essential intermediate at the junction of anabolic and catabolic pathways. AcsA undergoes a two-step reaction. In the first half reaction, AcsA combines acetate with ATP to form acetyl-adenylate (AcAMP) intermediate. In the second half reaction, it can then transfer the acetyl group from AcAMP to the sulfhydryl group of CoA, forming the product AcCoA. In Shewanella putrefaciens (strain CN-32 / ATCC BAA-453), this protein is Acetyl-coenzyme A synthetase.